The chain runs to 392 residues: Major outer membrane protein P.IA (392 aa).

Residues 1 to 19 (MRKKLTALVLSALPLAAVA) form the signal peptide.

The protein belongs to the Gram-negative porin family. Homotrimer.

The protein resides in the cell outer membrane. In terms of biological role, serves as a slightly cation selective porin. Major antigen on the gonococcal cell surface and it may have pathogenic properties in addition to its porin activity. The protein is Major outer membrane protein P.IA (porA) of Neisseria meningitidis serogroup B (strain ATCC BAA-335 / MC58).